The chain runs to 224 residues: Uracil-DNA glycosylase (224 aa).

Residue D64 is the Proton acceptor of the active site.

This sequence belongs to the uracil-DNA glycosylase (UDG) superfamily. UNG family.

It localises to the cytoplasm. The catalysed reaction is Hydrolyzes single-stranded DNA or mismatched double-stranded DNA and polynucleotides, releasing free uracil.. Excises uracil residues from the DNA which can arise as a result of misincorporation of dUMP residues by DNA polymerase or due to deamination of cytosine. In Clostridioides difficile (strain 630) (Peptoclostridium difficile), this protein is Uracil-DNA glycosylase.